The sequence spans 117 residues: uncharacterized protein (117 aa).

It is found in the cytoplasm. It localises to the nucleus. This is an uncharacterized protein from Schizosaccharomyces pombe (strain 972 / ATCC 24843) (Fission yeast).